Consider the following 347-residue polypeptide: Biotin synthase (347 aa).

A Radical SAM core domain is found at 54 to 273 (NHVETASLLS…IAVARIMMPK (220 aa)). The [4Fe-4S] cluster site is built by C69, C73, and C76. [2Fe-2S] cluster contacts are provided by C113, C144, C204, and R277.

It belongs to the radical SAM superfamily. Biotin synthase family. Homodimer. [4Fe-4S] cluster serves as cofactor. The cofactor is [2Fe-2S] cluster.

The catalysed reaction is (4R,5S)-dethiobiotin + (sulfur carrier)-SH + 2 reduced [2Fe-2S]-[ferredoxin] + 2 S-adenosyl-L-methionine = (sulfur carrier)-H + biotin + 2 5'-deoxyadenosine + 2 L-methionine + 2 oxidized [2Fe-2S]-[ferredoxin]. Its pathway is cofactor biosynthesis; biotin biosynthesis; biotin from 7,8-diaminononanoate: step 2/2. Catalyzes the conversion of dethiobiotin (DTB) to biotin by the insertion of a sulfur atom into dethiobiotin via a radical-based mechanism. The chain is Biotin synthase from Afipia carboxidovorans (strain ATCC 49405 / DSM 1227 / KCTC 32145 / OM5) (Oligotropha carboxidovorans).